Consider the following 79-residue polypeptide: Small ribosomal subunit protein bS18 (79 aa).

This sequence belongs to the bacterial ribosomal protein bS18 family. As to quaternary structure, part of the 30S ribosomal subunit. Forms a tight heterodimer with protein bS6.

In terms of biological role, binds as a heterodimer with protein bS6 to the central domain of the 16S rRNA, where it helps stabilize the platform of the 30S subunit. In Bradyrhizobium sp. (strain BTAi1 / ATCC BAA-1182), this protein is Small ribosomal subunit protein bS18.